A 157-amino-acid polypeptide reads, in one-letter code: Ribosome maturation factor RimP (157 aa).

Belongs to the RimP family.

It localises to the cytoplasm. Functionally, required for maturation of 30S ribosomal subunits. The chain is Ribosome maturation factor RimP from Synechococcus sp. (strain CC9311).